The sequence spans 171 residues: Protein GrpE (171 aa).

The tract at residues 1–20 (MNEEKEESPSTEAEGAGAEV) is disordered.

This sequence belongs to the GrpE family. Homodimer.

The protein resides in the cytoplasm. Functionally, participates actively in the response to hyperosmotic and heat shock by preventing the aggregation of stress-denatured proteins, in association with DnaK and GrpE. It is the nucleotide exchange factor for DnaK and may function as a thermosensor. Unfolded proteins bind initially to DnaJ; upon interaction with the DnaJ-bound protein, DnaK hydrolyzes its bound ATP, resulting in the formation of a stable complex. GrpE releases ADP from DnaK; ATP binding to DnaK triggers the release of the substrate protein, thus completing the reaction cycle. Several rounds of ATP-dependent interactions between DnaJ, DnaK and GrpE are required for fully efficient folding. This is Protein GrpE from Acidithiobacillus ferrooxidans (strain ATCC 23270 / DSM 14882 / CIP 104768 / NCIMB 8455) (Ferrobacillus ferrooxidans (strain ATCC 23270)).